A 138-amino-acid chain; its full sequence is Basic phospholipase A2 chain HDP-1P (138 aa).

An N-terminal signal peptide occupies residues 1–16 (MRILWIVAVCLIGVEG). 7 disulfide bridges follow: C42–C131, C44–C60, C59–C111, C65–C138, C66–C104, C73–C97, and C91–C102. Positions 43, 45, and 47 each coordinate Ca(2+). Residue H63 is part of the active site. Ca(2+) is bound at residue D64. Residue D105 is part of the active site.

In terms of assembly, heterodimer; non-covalently linked. The toxic basic protein has phospholipase A2 activity (chain HDP-1P) and the non-toxic acidic protein functions as its inhibitor (chain HPD-1I (AC A4VBF0)). Ca(2+) serves as cofactor. In terms of tissue distribution, expressed by the venom gland.

The protein localises to the secreted. The enzyme catalyses a 1,2-diacyl-sn-glycero-3-phosphocholine + H2O = a 1-acyl-sn-glycero-3-phosphocholine + a fatty acid + H(+). Its activity is regulated as follows. Enzymatic activity and neurotoxicity are inhibited by Triton X-100, which has been determined to be located in the center of the hydrophobic channel of the enzyme. In terms of biological role, heterodimer: shows the same activities as the monomer, but with a lower potency. Monomer: snake venom phospholipase A2 (PLA2) that shows presynaptic neurotoxicity, anticoagulant activity and that weakly inhibits ADP-induced platelet aggregation. Inhibits exocytosis in pancreatic beta cells, confirming it can act presynaptically in inhibiting the exocytosis of neurotransmitters in neurons. PLA2 catalyzes the calcium-dependent hydrolysis of the 2-acyl groups in 3-sn-phosphoglycerides. This chain is Basic phospholipase A2 chain HDP-1P, found in Vipera nikolskii (Nikolsky's adder).